We begin with the raw amino-acid sequence, 354 residues long: Polyribonucleotide 5'-hydroxyl-kinase PF0112 (354 aa).

G36 to T43 provides a ligand contact to ATP.

It depends on a divalent metal cation as a cofactor.

The enzyme catalyses a 5'-end dephospho-2'-deoxyribonucleoside-DNA + ATP = a 5'-end 5'-phospho-2'-deoxyribonucleoside-DNA + ADP + H(+). It catalyses the reaction a 5'-end dephospho-ribonucleoside-RNA + ATP = a 5'-end 5'-phospho-ribonucleoside-RNA + ADP + H(+). In terms of biological role, polynucleotide kinase that can phosphorylate the 5'-hydroxyl groups of both single-stranded RNA (ssRNA) and single-stranded DNA (ssDNA). Exhibits a strong preference for ssRNA. In Pyrococcus furiosus (strain ATCC 43587 / DSM 3638 / JCM 8422 / Vc1), this protein is Polyribonucleotide 5'-hydroxyl-kinase PF0112.